Here is a 231-residue protein sequence, read N- to C-terminus: Enolase-phosphatase E1 (231 aa).

Residues 206–231 (LLERPGNAPQPKHSHPKISSFENFNP) form a disordered region.

The protein belongs to the HAD-like hydrolase superfamily. MasA/MtnC family. In terms of assembly, monomer. The cofactor is Mg(2+).

The catalysed reaction is 5-methylsulfanyl-2,3-dioxopentyl phosphate + H2O = 1,2-dihydroxy-5-(methylsulfanyl)pent-1-en-3-one + phosphate. The protein operates within amino-acid biosynthesis; L-methionine biosynthesis via salvage pathway; L-methionine from S-methyl-5-thio-alpha-D-ribose 1-phosphate: step 3/6. It functions in the pathway amino-acid biosynthesis; L-methionine biosynthesis via salvage pathway; L-methionine from S-methyl-5-thio-alpha-D-ribose 1-phosphate: step 4/6. In terms of biological role, bifunctional enzyme that catalyzes the enolization of 2,3-diketo-5-methylthiopentyl-1-phosphate (DK-MTP-1-P) into the intermediate 2-hydroxy-3-keto-5-methylthiopentenyl-1-phosphate (HK-MTPenyl-1-P), which is then dephosphorylated to form the acireductone 1,2-dihydroxy-3-keto-5-methylthiopentene (DHK-MTPene). The polypeptide is Enolase-phosphatase E1 (Leptospira borgpetersenii serovar Hardjo-bovis (strain JB197)).